The chain runs to 264 residues: MKKITINDLMKWKQEGRKFATSTAYDASFAQLFESQEMPVLLVGDSLGMVLQGETDTLPVTVDDIAYHTRCVRKGSPNCLLMADMPFMSYATPEQACENAAKLVRAGANMVKIEGGDWLVDTVKMLTERAVPVCAHLGLTPQSVNIFGGYKVQGREQDKADRMVRDALALQEAGAQIVLLECVPAELANRITQILDVPVIGIGAGNGTDGQILVMHDMFGISANYMPKFSKNFLAETGDIRQAVAKYIEDVASGAFPDLAHTIA.

D45 and D84 together coordinate Mg(2+). 3-methyl-2-oxobutanoate-binding positions include 45–46, D84, and K112; that span reads DS. Position 114 (E114) interacts with Mg(2+). E181 (proton acceptor) is an active-site residue.

This sequence belongs to the PanB family. Homodecamer; pentamer of dimers. It depends on Mg(2+) as a cofactor.

The protein localises to the cytoplasm. It catalyses the reaction 3-methyl-2-oxobutanoate + (6R)-5,10-methylene-5,6,7,8-tetrahydrofolate + H2O = 2-dehydropantoate + (6S)-5,6,7,8-tetrahydrofolate. It functions in the pathway cofactor biosynthesis; (R)-pantothenate biosynthesis; (R)-pantoate from 3-methyl-2-oxobutanoate: step 1/2. In terms of biological role, catalyzes the reversible reaction in which hydroxymethyl group from 5,10-methylenetetrahydrofolate is transferred onto alpha-ketoisovalerate to form ketopantoate. The protein is 3-methyl-2-oxobutanoate hydroxymethyltransferase of Vibrio cholerae serotype O1 (strain ATCC 39541 / Classical Ogawa 395 / O395).